Reading from the N-terminus, the 129-residue chain is Small ribosomal subunit protein uS9 (129 aa).

It belongs to the universal ribosomal protein uS9 family.

The protein is Small ribosomal subunit protein uS9 (rpsI) of Treponema pallidum (strain Nichols).